Consider the following 471-residue polypeptide: Plant intracellular Ras-group-related LRR protein 2 (471 aa).

Residues 106–133 adopt a coiled-coil conformation; that stretch reads VVRLDEVHDSYEKKLKDTEEELSRVYST. 10 LRR repeats span residues 159-182, 183-205, 206-229, 231-251, 253-275, 276-298, 300-321, 324-346, 347-369, and 371-392; these read GGTV…FWKV, VGLV…ISKL, KKLE…GMLL, LRIL…IAHC, SLVE…GYGL, QNLE…ISEM, NLKY…IGRL, LEVL…ITDL, TNLR…FYRL, and KLEK…VATQ. The short motif at 393 to 405 is the GVYW; degenerate element; it reads GAEVVREFMRKRW.

This sequence belongs to the SHOC2 family. Widely expressed but preferentially in roots.

Leucine-rich repeat protein that likely mediates protein interactions, possibly in the context of signal transduction. The chain is Plant intracellular Ras-group-related LRR protein 2 (PIRL2) from Arabidopsis thaliana (Mouse-ear cress).